Consider the following 210-residue polypeptide: Oxygen-insensitive NADPH nitroreductase (210 aa).

NADP(+) is bound at residue glycine 150–glycine 155.

The protein belongs to the nitroreductase family.

Reduction of a variety of nitroaromatic compounds using NADPH as source of reducing equivalents; two electrons are transferred. Capable of reducing metronidazole; inactive RdxA renders the bacterium resistant to this compound. The reduction of metronidazole generates hydroxylamine, a potent mutagen and bactericide. The chain is Oxygen-insensitive NADPH nitroreductase (rdxA) from Helicobacter pylori (strain ATCC 700392 / 26695) (Campylobacter pylori).